The sequence spans 329 residues: Beta-ketoacyl-[acyl-carrier-protein] synthase III (329 aa).

Active-site residues include cysteine 123 and histidine 256. The ACP-binding stretch occupies residues 257–261 (QANIR). Asparagine 286 is an active-site residue.

The protein belongs to the thiolase-like superfamily. FabH family. Homodimer.

The protein resides in the cytoplasm. The enzyme catalyses malonyl-[ACP] + acetyl-CoA + H(+) = 3-oxobutanoyl-[ACP] + CO2 + CoA. It participates in lipid metabolism; fatty acid biosynthesis. Catalyzes the condensation reaction of fatty acid synthesis by the addition to an acyl acceptor of two carbons from malonyl-ACP. Catalyzes the first condensation reaction which initiates fatty acid synthesis and may therefore play a role in governing the total rate of fatty acid production. Possesses both acetoacetyl-ACP synthase and acetyl transacylase activities. Its substrate specificity determines the biosynthesis of branched-chain and/or straight-chain of fatty acids. The protein is Beta-ketoacyl-[acyl-carrier-protein] synthase III of Burkholderia lata (strain ATCC 17760 / DSM 23089 / LMG 22485 / NCIMB 9086 / R18194 / 383).